Here is a 320-residue protein sequence, read N- to C-terminus: Small ribosomal subunit protein mS35 (320 aa).

The disordered stretch occupies residues 24–63 (SVASPAAPRAGPRTASRSERPMRRKALPPRTEKMDTDQDW).

This sequence belongs to the mitochondrion-specific ribosomal protein mS35 family. Component of the mitochondrial ribosome small subunit (28S) which comprises a 12S rRNA and about 30 distinct proteins.

The protein localises to the mitochondrion. This Mus musculus (Mouse) protein is Small ribosomal subunit protein mS35.